Reading from the N-terminus, the 708-residue chain is Ion-translocating oxidoreductase complex subunit C (708 aa).

4Fe-4S ferredoxin-type domains lie at 369-397 (GEPQEEQSCIRCSACADACPADLLPQQLY) and 407-436 (KATTHNIADCIECGACAWVCPSNIPLVQYF). Residues C377, C380, C383, C387, C416, C419, C422, and C426 each contribute to the [4Fe-4S] cluster site. The tract at residues 630 to 682 (AKARKLEQQQANAEPEEQIDPRKAAVEAAIARAKARKLEQQQANAEPEEQIDP) is disordered.

The protein belongs to the 4Fe4S bacterial-type ferredoxin family. RnfC subfamily. The complex is composed of six subunits: RsxA, RsxB, RsxC, RsxD, RsxE and RsxG. [4Fe-4S] cluster serves as cofactor.

The protein localises to the cell inner membrane. Functionally, part of a membrane-bound complex that couples electron transfer with translocation of ions across the membrane. Required to maintain the reduced state of SoxR. The chain is Ion-translocating oxidoreductase complex subunit C from Escherichia coli (strain UTI89 / UPEC).